Here is a 431-residue protein sequence, read N- to C-terminus: Glutamate-1-semialdehyde 2,1-aminomutase 2 (431 aa).

At lysine 268 the chain carries N6-(pyridoxal phosphate)lysine.

The protein belongs to the class-III pyridoxal-phosphate-dependent aminotransferase family. HemL subfamily. In terms of assembly, homodimer. It depends on pyridoxal 5'-phosphate as a cofactor.

The protein resides in the cytoplasm. It carries out the reaction (S)-4-amino-5-oxopentanoate = 5-aminolevulinate. It participates in porphyrin-containing compound metabolism; protoporphyrin-IX biosynthesis; 5-aminolevulinate from L-glutamyl-tRNA(Glu): step 2/2. The sequence is that of Glutamate-1-semialdehyde 2,1-aminomutase 2 from Bacillus licheniformis (strain ATCC 14580 / DSM 13 / JCM 2505 / CCUG 7422 / NBRC 12200 / NCIMB 9375 / NCTC 10341 / NRRL NRS-1264 / Gibson 46).